Here is a 399-residue protein sequence, read N- to C-terminus: S-adenosylmethionine synthase (399 aa).

Residue H19 participates in ATP binding. D21 contacts Mg(2+). E47 contributes to the K(+) binding site. L-methionine is bound by residues E60 and Q103. The interval 103–113 (QSPDIAQGVNQ) is flexible loop. Residues 179–181 (DGK), 246–247 (RF), D255, 261–262 (RK), A278, and K282 each bind ATP. Residue D255 coordinates L-methionine. K286 provides a ligand contact to L-methionine.

Belongs to the AdoMet synthase family. In terms of assembly, homotetramer; dimer of dimers. Mg(2+) is required as a cofactor. K(+) serves as cofactor.

It localises to the cytoplasm. It catalyses the reaction L-methionine + ATP + H2O = S-adenosyl-L-methionine + phosphate + diphosphate. The protein operates within amino-acid biosynthesis; S-adenosyl-L-methionine biosynthesis; S-adenosyl-L-methionine from L-methionine: step 1/1. Functionally, catalyzes the formation of S-adenosylmethionine (AdoMet) from methionine and ATP. The overall synthetic reaction is composed of two sequential steps, AdoMet formation and the subsequent tripolyphosphate hydrolysis which occurs prior to release of AdoMet from the enzyme. The protein is S-adenosylmethionine synthase of Halalkalibacterium halodurans (strain ATCC BAA-125 / DSM 18197 / FERM 7344 / JCM 9153 / C-125) (Bacillus halodurans).